Consider the following 204-residue polypeptide: Imidazoleglycerol-phosphate dehydratase (204 aa).

Belongs to the imidazoleglycerol-phosphate dehydratase family.

It localises to the cytoplasm. It carries out the reaction D-erythro-1-(imidazol-4-yl)glycerol 3-phosphate = 3-(imidazol-4-yl)-2-oxopropyl phosphate + H2O. It functions in the pathway amino-acid biosynthesis; L-histidine biosynthesis; L-histidine from 5-phospho-alpha-D-ribose 1-diphosphate: step 6/9. This is Imidazoleglycerol-phosphate dehydratase from Corynebacterium jeikeium (strain K411).